A 393-amino-acid chain; its full sequence is FAD-dependent monooxygenase dbaB (393 aa).

Positions 1–23 (MTRTSPTLPVIILGAGMVGLTLA) are cleaved as a signal peptide. FAD contacts are provided by glutamate 37 and arginine 107. An N-linked (GlcNAc...) asparagine glycan is attached at asparagine 128. Residue tyrosine 221 is part of the active site. Asparagine 233 carries N-linked (GlcNAc...) asparagine glycosylation. Aspartate 320 contacts FAD.

This sequence belongs to the paxM FAD-dependent monooxygenase family. FAD serves as cofactor.

The protein operates within secondary metabolite biosynthesis. Functionally, FAD-dependent monooxygenase; part of the gene cluster that mediates the biosynthesis of the antibiotic 2,4-dihydroxy-3-methyl-6-(2-oxopropyl)benzaldehyde (DHMBA) and its derivatives. The direct non-reducing polyketide synthase dbaI product is 2,4-dihydroxy-3-methyl-6-(2-oxopropyl)benzaldehyde (DHMBA), produced by condensation of one acetyl-CoA starter unit with 4 malonyl-CoA units and one methylation step. The FAD-dependent monooxygenase dbaH is responsible for the synthesis of yellow pigments derived from the oxidation of DHMBA. The roles of dbaB, C, E and F have still to be determined. This Emericella nidulans (strain FGSC A4 / ATCC 38163 / CBS 112.46 / NRRL 194 / M139) (Aspergillus nidulans) protein is FAD-dependent monooxygenase dbaB.